The following is a 352-amino-acid chain: Uricase (352 aa).

The tract at residues 1–32 (MFATPLRQPAAANHQTPKNSAGMDEHGKPYQY) is disordered. A compositionally biased stretch (basic and acidic residues) spans 23–32 (MDEHGKPYQY). Catalysis depends on charge relay system residues K41 and T86. 7 residues coordinate urate: T86, D87, F214, R231, V279, Q280, and N306. Catalysis depends on H308, which acts as the Charge relay system. The short motif at 350–352 (SHL) is the Microbody targeting signal element.

It belongs to the uricase family. As to expression, malpighian tubules.

It localises to the peroxisome. It catalyses the reaction urate + O2 + H2O = 5-hydroxyisourate + H2O2. Its pathway is purine metabolism; urate degradation; (S)-allantoin from urate: step 1/3. With respect to regulation, repressed by 20-hydroxyecdysone. Functionally, catalyzes the oxidation of uric acid to 5-hydroxyisourate, which is further processed to form (S)-allantoin. This is Uricase (Uro) from Drosophila melanogaster (Fruit fly).